A 1665-amino-acid chain; its full sequence is MLKCIPLWRCNRHVESVDKRHCSLQVVPEEIYRYSRSLEELLLDANQLRELPKPFFRLLNLRKLGLSDNEIQRLPPEVANFMQLVELDVSRNDIPEIPESIKFCKALEIADFSGNPLSRLPDGFTQLRSLAHLALNDVSLQALPGDVGNLANLVTLELRENLLKSLPASLSFLVKLEQLDLGGNDLEVLPDTLGALPNLRELWLDRNQLSALPPELGNLRRLVCLDVSENRLEELPVELGGLALLTDLLLSQNLLQRLPEGIGQLKQLSILKVDQNRLCEVTEAIGDCENLSELILTENLLTALPHSLGKLTKLTNLNVDRNHLEVLPPEIGGCVALSVLSLRDNRLAVLPPELAHTAELHVLDVAGNRLRSLPFALTHLNLKALWLAENQAQPMLRFQTEDDAQTGEKVLTCYLLPQQPLPSLEDAGQQSSPSESCSDAPLSRVSVIQFEDTLEGEEDAEEAAAEKRGLQRRATPHPSELKVMKRGIEERRNEAFVCKPDPSPPSPSEEEKRLSAESALSGGSVPSASTASEGEPEILPAEVQGLGQHEAMPAQEEYTEDDYNEPTVHFAEDTLIPREDGESEEGQPEAAWPLPSGRQRLIRKDTPHYKKHFKISKLPQPEAVVALLQGVQTDREGPTAGWHNGPHTPWAPRAHEEEEEEEEENRDEEEGEATTEEDDKEEAVASAPSVKGVSFDQANNLLIEPARIEEEELTLTIVRQTGGLGISIAGGKGSTPYKGDDEGIFISRVSEEGPAARAGVRVGDKLLEVNGVALQDAEHHEAVEALRGAGAAVQMRVWRERMVEPENAVTITPLRPEDDYSPREWRGGGLRLPLLQPETPVSLRQRHAACLVRSEKGLGFSIAGGKGSTPYRAGDGGIFISRIAEGGAAHRAGTLQVGDRVLSINGVDMTEARHDHAVSLLTAASPTISLLLERETGGTYPPSPPPHSSPTPAATVAATVSTAVPGEPLLPRLSPSLLATALEGPYPVEEICLPRAGGPLGLSIVGGSDHSSHPFGVQDPGVFISKVLPRGLAARCGLRVGDRILAVNGQDVREATHQEAVSALLRPCLELCLLVRRDPPPPGMRELCIQKAPGEKLGISIRGGAKGHAGNPCDPTDEGIFISKVSPTGAAGRDGRLRVGLRLLEVNQQSLLGLTHAEAVQLLRSVGDTLTVLVCDGFDTSTTTALEVSPGVIANPFAAGLGHRNSLESISSIDRELSPEGPGKEKELASQALPWESESAETTGRNLEPLKLDYRALAALPSAGSLQRGPSATTGGKTTEAPCSPGSQQTKPGVIQPLAQAWPRNSPAPRGRGGPCSPPSPDELPANVKQAYRAFAAVPTVHPPENSATQPPTPGPAASPEQLSFRERQKYFELEVRVPQAEGPPKRVSLVGADDLRKMQEEEARKLQQKRAQMLREEAVTSGPDMGLASDRESPDDQQEAEQPWAVPSHAGGSSPSSPPPLGGNAPVRTAKAERRHQERLRMQSPELPAPERALSPAERRALEAEKRALWRAARMKSLEQDALRAQMVLSKSQEGRGKRGPLERLAEAPSPAPTPSPTPLEDFGLQTSASPGRLPLSGKKFDYRAFAALPSSRPVYDIQSPDFVEELRTLEASPSPGSQEEDGEVALVLLGRPSPGAVGPEDMTLCSSRRSVRPGRRGLGPVPS.

The sufficient for targeting to adherens junction and to inhibit cell proliferation stretch occupies residues 1–804; that stretch reads MLKCIPLWRC…MRVWRERMVE (804 aa). A Phosphoserine modification is found at Ser37. 16 LRR repeats span residues 37–58, 60–81, 83–104, 106–127, 129–150, 152–174, 175–197, 198–219, 221–243, 244–265, 267–288, 290–312, 313–334, 336–357, 359–381, and 382–402; these read SLEE…FFRL, NLRK…VANF, QLVE…IKFC, ALEI…FTQL, SLAH…VGNL, NLVT…SFLV, KLEQ…GALP, NLRE…LGNL, RLVC…GGLA, LLTD…IGQL, QLSI…IGDC, NLSE…GKLT, KLTN…IGGC, ALSV…LAHT, ELHV…THLN, and LKAL…QTED. A Phosphothreonine modification is found at Thr378. Disordered regions lie at residues 422–615 and 635–689; these read PSLE…HFKI and REGP…SAPS. A compositionally biased stretch (polar residues) spans 428–437; the sequence is GQQSSPSESC. The segment covering 452 to 463 has biased composition (acidic residues); it reads DTLEGEEDAEEA. Residues 455 to 475 are a coiled coil; that stretch reads EGEEDAEEAAAEKRGLQRRAT. At Thr475 the chain carries Phosphothreonine. Basic and acidic residues-rich tracts occupy residues 479 to 494 and 570 to 580; these read SELK…RRNE and FAEDTLIPRED. Ser583 is subject to Phosphoserine. A coiled-coil region spans residues 653-687; sequence RAHEEEEEEEEENRDEEEGEATTEEDDKEEAVASA. Residues 657–681 are compositionally biased toward acidic residues; that stretch reads EEEEEEEENRDEEEGEATTEEDDKE. Phosphothreonine occurs at positions 674 and 675. A phosphoserine mark is found at Ser694 and Ser750. An interaction with ARHGEF7 region spans residues 703 to 1215; that stretch reads IEPARIEEEE…SLESISSIDR (513 aa). The 88-residue stretch at 714–801 folds into the PDZ 1 domain; it reads TLTIVRQTGG…AVQMRVWRER (88 aa). Positions 714 to 1180 are required for interaction with VIM; sequence TLTIVRQTGG…TVLVCDGFDT (467 aa). Thr812 bears the Phosphothreonine mark. Phosphoserine is present on residues Ser821, Ser861, and Ser925. PDZ domains follow at residues 848–936, 990–1079, and 1086–1180; these read AACL…ERET, EICL…RRDP, and ELCI…GFDT. 8 positions are modified to phosphoserine: Ser1126, Ser1206, Ser1209, Ser1212, Ser1218, Ser1262, Ser1265, and Ser1284. Residues 1213 to 1228 show a composition bias toward basic and acidic residues; the sequence is IDRELSPEGPGKEKEL. The tract at residues 1213-1246 is disordered; the sequence is IDRELSPEGPGKEKELASQALPWESESAETTGRN. 2 disordered regions span residues 1263-1325 and 1341-1501; these read AGSL…DELP and VHPP…AERR. Polar residues predominate over residues 1264–1277; sequence GSLQRGPSATTGGK. Lys1291 is subject to Omega-N-methylarginine. A Phosphoserine modification is found at Ala1299. Arg1312 carries the omega-N-methylarginine modification. Position 1320 is a phosphoserine (Ser1320). The residue at position 1353 (Thr1353) is a Phosphothreonine. Position 1359 is a phosphoserine (Ser1359). Residues 1364–1376 are compositionally biased toward basic and acidic residues; sequence SFRERQKYFELEV. Ser1389 carries the phosphoserine modification. The stretch at 1390 to 1421 forms a coiled coil; sequence LVGADDLRKMQEEEARKLQQKRAQMLREEAVT. Basic and acidic residues predominate over residues 1394–1406; sequence DDLRKMQEEEARK. Phosphoserine occurs at positions 1455 and 1458. Basic and acidic residues predominate over residues 1471 to 1482; sequence AKAERRHQERLR. Residues Ser1485, Ser1496, and Ser1518 each carry the phosphoserine modification. Residues 1530 to 1577 form a disordered region; sequence LSKSQEGRGKRGPLERLAEAPSPAPTPSPTPLEDFGLQTSASPGRLPL. The segment covering 1534-1547 has biased composition (basic and acidic residues); the sequence is QEGRGKRGPLERLA. Ser1551 is subject to Phosphoserine. Position 1555 is a phosphothreonine (Thr1555). A phosphoserine mark is found at Ser1557, Ser1571, and Ser1601. Residues 1632 to 1665 are disordered; that stretch reads GRPSPGAVGPEDMTLCSSRRSVRPGRRGLGPVPS.

The protein belongs to the LAP (LRR and PDZ) protein family. Interacts with UBE3A. Interacts with PAK1 and PAK2. Interacts (via PDZ domains) with VANGL2. Interacts (via PDZ domains) with LPP and TRIP6; the interaction is direct. Interacts (via PDZ domains) with TJP2. Interacts (via PDZ domains) with APC; may mediate APC targeting to adherens junctions of epithelial cells. Interacts (via PDZ domains) with TSHR; regulates TSHR trafficking and function. Interacts with ARHGEF7 and GIT1; interacts directly with ARHGEF7. Interacts with CTNNB1. Interacts with MAPK12. Interacts (via PDZ domains 1 and 3) with MCC. Interacts with DLG5. Interacts with STK4/MST1 and LATS1 in the presence of DLG5. Interacts (via PDZ domain 3) with CRTAM (via PDZ-binding motif); the interaction promotes CRTAM and SCRIB polarization in a subset of CD4+ T-cells. Interacts with YES1, when YES1 is in a closed conformation; the interaction facilitates YES1 autophosphorylation. Interacts (via PDZ domains) with VIM; the interaction protects SCRIB from proteasomal degradation and facilitates SCRIB localization to intermediate filaments, the interaction is reduced by cell contact inhibition. Post-translationally, ubiquitinated; targeted for UBE3A-dependent multiubiquitination and degraded. In terms of processing, palmitoylated. Could be depalmitoylated by LYPLA1 and/or LYPLA2. Palmitoylation of SCRIB by ZDHHC7 is required for its localization to cell-cell junctions, function in the establishement of epithelial cell polarity and the regulation of downstream signaling pathways important for epithelial cell differentiation. Expressed in CD4+ T-cells (at protein level). Found in a wide range of tissues including liver, kidney and spleen. Also expressed in the brain (at protein level).

It is found in the cell membrane. The protein localises to the cell junction. The protein resides in the adherens junction. It localises to the cell projection. Its subcellular location is the lamellipodium. It is found in the cytoplasm. The protein localises to the postsynapse. The protein resides in the presynapse. In terms of biological role, scaffold protein involved in different aspects of polarized cell differentiation regulating epithelial and neuronal morphogenesis and T-cell polarization. Via its interaction with CRTAM, required for the late phase polarization of a subset of CD4+ T-cells, which in turn regulates TCR-mediated proliferation and IFNG and IL22 production. Plays a role in cell directional movement, cell orientation, cell sheet organization and Golgi complex polarization at the cell migration front. Promotes epithelial cell layer barrier function via maintaining cell-cell adhesion. Most probably functions in the establishment of apico-basal cell polarity. May function in cell proliferation regulating progression from G1 to S phase and as a positive regulator of apoptosis for instance during acinar morphogenesis of the mammary epithelium. May regulate cell invasion via MAPK-mediated cell migration and adhesion. May play a role in exocytosis and in the targeting of synaptic vesicles to synapses. Functions as an activator of Rac GTPase activity. The chain is Protein scribble homolog from Mus musculus (Mouse).